A 700-amino-acid chain; its full sequence is Centrosomal protein of 63 kDa (700 aa).

The residue at position 1 (methionine 1) is an N-acetylmethionine. 2 coiled-coil regions span residues 73 to 283 and 343 to 533; these read KEVG…ETFI and LQAE…MCKK. Phosphoserine is present on residues serine 278, lysine 488, and leucine 492. A disordered region spans residues 570–603; sequence QYKTGHHSPRGQTLDSIDPVARGPSPLSSHISPG. The span at 593–603 shows a compositional bias: low complexity; that stretch reads PSPLSSHISPG.

It belongs to the CEP63 family. Interacts with CEP152 and CDK1; these interactions recruit both ligands to centrosomes. Interacts with CDK2, CDK5RAP2, WDR62, CEP90, KIAA0753/moonraker and CCDC14. CEP63, CDK5RAP2, CEP152, WDR62 are proposed to form a stepwise assembled complex at the centrosome forming a ring near parental centrioles. Interacts with CCDC57; the interaction is required for their location to proximal end of centrioles. Interacts with FXR1; promoting its stabilization. Post-translationally, polyubiquitinated via 'Lys-48'-linked ubiquitin, leading to its degradation. Deubiquitinated by USP36, promoting its stabilization.

It is found in the cytoplasm. The protein localises to the cytoskeleton. Its subcellular location is the microtubule organizing center. It localises to the centrosome. The protein resides in the centriole. It is found in the centriolar satellite. Required for normal spindle assembly. Plays a key role in mother-centriole-dependent centriole duplication; the function also seems to involve CEP152, CDK5RAP2 and WDR62 through a stepwise assembled complex at the centrosome that recruits CDK2 required for centriole duplication. Reported to be required for centrosomal recruitment of CEP152; however, this function has been questioned. Also recruits CDK1 to centrosomes. Plays a role in DNA damage response. Following DNA damage, such as double-strand breaks (DSBs), is removed from centrosomes; this leads to the inactivation of spindle assembly and delay in mitotic progression. Promotes stabilization of FXR1 protein by inhibiting FXR1 ubiquitination. The polypeptide is Centrosomal protein of 63 kDa (Mus musculus (Mouse)).